The sequence spans 330 residues: Aspartate--ammonia ligase (330 aa).

Belongs to the class-II aminoacyl-tRNA synthetase family. AsnA subfamily.

The protein localises to the cytoplasm. The enzyme catalyses L-aspartate + NH4(+) + ATP = L-asparagine + AMP + diphosphate + H(+). The protein operates within amino-acid biosynthesis; L-asparagine biosynthesis; L-asparagine from L-aspartate (ammonia route): step 1/1. The polypeptide is Aspartate--ammonia ligase (Salmonella schwarzengrund (strain CVM19633)).